Consider the following 316-residue polypeptide: ATP synthase gamma chain (316 aa).

The protein belongs to the ATPase gamma chain family. F-type ATPases have 2 components, CF(1) - the catalytic core - and CF(0) - the membrane proton channel. CF(1) has five subunits: alpha(3), beta(3), gamma(1), delta(1), epsilon(1). CF(0) has three main subunits: a, b and c.

Its subcellular location is the cellular thylakoid membrane. Functionally, produces ATP from ADP in the presence of a proton gradient across the membrane. The gamma chain is believed to be important in regulating ATPase activity and the flow of protons through the CF(0) complex. The chain is ATP synthase gamma chain from Prochlorococcus marinus (strain NATL2A).